The primary structure comprises 84 residues: uncharacterized protein (84 aa).

This is an uncharacterized protein from Dictyostelium discoideum (Social amoeba).